The primary structure comprises 572 residues: Probable inactive glycosyltransferase 25 family member 3 (572 aa).

N-linked (GlcNAc...) asparagine glycans are attached at residues asparagine 52, asparagine 130, asparagine 214, and asparagine 337. The Prevents secretion from ER signature appears at arginine 569–leucine 572.

This sequence belongs to the glycosyltransferase 25 family.

The protein resides in the endoplasmic reticulum lumen. Functionally, probable cell adhesion protein involved in leukocyte transmigration across the blood-brain barrier. Does not express any beta-galactosyltransferase activity in vitro. The chain is Probable inactive glycosyltransferase 25 family member 3 (Cercam) from Rattus norvegicus (Rat).